Consider the following 312-residue polypeptide: Undecaprenyl-diphosphatase (312 aa).

Helical transmembrane passes span 74–94 (GVAFTAVIQLGSIVSIVWYFW), 122–142 (VSIGLGTIPIVFFGLLIKVFI), 154–174 (VAIAIASIIMALLLVIAERIG), 183–203 (LDIRDGIVIGLAQVLALIPGV), 226–246 (FSFLLGLPAITLAGLVELKTL), 254–274 (VGLVATLTGVFSAIIFSYIAI), and 288–308 (IFIWYRLAFGILILIGIISGV).

This sequence belongs to the UppP family.

It localises to the cell inner membrane. It catalyses the reaction di-trans,octa-cis-undecaprenyl diphosphate + H2O = di-trans,octa-cis-undecaprenyl phosphate + phosphate + H(+). Catalyzes the dephosphorylation of undecaprenyl diphosphate (UPP). Confers resistance to bacitracin. The sequence is that of Undecaprenyl-diphosphatase from Trichodesmium erythraeum (strain IMS101).